The following is a 562-amino-acid chain: MFS-type efflux pump elcC (562 aa).

11 helical membrane-spanning segments follow: residues 50-70 (WVFL…GAAP), 80-100 (VVAG…VAEF), 111-131 (GMLG…GGAF), 139-159 (LCFY…FLLV), 184-204 (LYGL…TQWG), 215-235 (IIAL…IEIW), 257-277 (IFSF…PLWF), 288-308 (SGIH…AAGG), 309-329 (MVFG…LAAV), 351-371 (VLYG…IQAA), and 383-403 (VVIF…QNVF). Asn448 carries N-linked (GlcNAc...) asparagine glycosylation. Residues 455 to 475 (FYVAVATAGLSMAGSILIPWL) traverse the membrane as a helical segment. Positions 515-562 (EIASEDSQSSDIEKVPRNNEVSTYDSQTSEVEKSSVGSTNRKVESIRN) are disordered. The segment covering 533–554 (NEVSTYDSQTSEVEKSSVGSTN) has biased composition (polar residues).

It belongs to the major facilitator superfamily. TCR/Tet family.

The protein resides in the cell membrane. In terms of biological role, MFS-type efflux pump; part of the gene cluster that mediates the biosynthesis of elsinochrome C, a perelyenequinone phytotoxin structurally similar to cercosporin. In Phaeosphaeria nodorum (strain SN15 / ATCC MYA-4574 / FGSC 10173) (Glume blotch fungus), this protein is MFS-type efflux pump elcC.